The sequence spans 482 residues: Abscisic acid 8'-hydroxylase 2 (482 aa).

A helical transmembrane segment spans residues 20–40; it reads PALITLTIVVVVVVLLFKWWL. A heme-binding site is contributed by C431.

This sequence belongs to the cytochrome P450 family. It depends on heme as a cofactor. In terms of tissue distribution, mainly expressed in dry seeds. Lower expression in rosette leaves, flowers, siliques and stems. Not expressed in roots. Expressed in both endosperm and vascular tissues of embryo during the seed development and in cortex and endodermis in germinating embryo.

It localises to the membrane. The enzyme catalyses 2-cis-(+)-abscisate + reduced [NADPH--hemoprotein reductase] + O2 = (+)-8'-hydroxyabscisate + oxidized [NADPH--hemoprotein reductase] + H2O + H(+). Its pathway is plant hormone degradation; abscisic acid degradation. Functionally, involved in the oxidative degradation of abscisic acid, but not in the isomerization of the produced 8'-hydroxyabscisic acid (8'-OH-ABA) to (-)-phaseic acid (PA). Involved in the control of seed dormancy and germination. The polypeptide is Abscisic acid 8'-hydroxylase 2 (CYP707A2) (Arabidopsis thaliana (Mouse-ear cress)).